We begin with the raw amino-acid sequence, 102 residues long: Aspartyl/glutamyl-tRNA(Asn/Gln) amidotransferase subunit C (102 aa).

The protein belongs to the GatC family. Heterotrimer of A, B and C subunits.

The enzyme catalyses L-glutamyl-tRNA(Gln) + L-glutamine + ATP + H2O = L-glutaminyl-tRNA(Gln) + L-glutamate + ADP + phosphate + H(+). It carries out the reaction L-aspartyl-tRNA(Asn) + L-glutamine + ATP + H2O = L-asparaginyl-tRNA(Asn) + L-glutamate + ADP + phosphate + 2 H(+). In terms of biological role, allows the formation of correctly charged Asn-tRNA(Asn) or Gln-tRNA(Gln) through the transamidation of misacylated Asp-tRNA(Asn) or Glu-tRNA(Gln) in organisms which lack either or both of asparaginyl-tRNA or glutaminyl-tRNA synthetases. The reaction takes place in the presence of glutamine and ATP through an activated phospho-Asp-tRNA(Asn) or phospho-Glu-tRNA(Gln). The chain is Aspartyl/glutamyl-tRNA(Asn/Gln) amidotransferase subunit C from Bordetella bronchiseptica (strain ATCC BAA-588 / NCTC 13252 / RB50) (Alcaligenes bronchisepticus).